Here is a 529-residue protein sequence, read N- to C-terminus: Listeriolysin O (529 aa).

A signal peptide spans 1 to 24 (MKKIMLVFITLILVSLPIAQQTEA). A disordered region spans residues 35 to 54 (SISSMAPPASPPASPKTPIE). A run of 4 beta stranded transmembrane segments spans residues 214 to 227 (ESQLIAKFGTAFKA), 234 to 243 (VNFGAISEGK), 312 to 321 (STKVKAAFDA), and 329 to 341 (SGDVELTNIIKNS). Positions 483–493 (ECTGLAWEWWR) match the Conserved undecapeptide motif. Positions 515 to 516 (TL) match the Cholesterol binding motif.

Belongs to the cholesterol-dependent cytolysin family. As to quaternary structure, homooligomeric pore complex of 35 to 50 subunits; when inserted in the host membrane.

It is found in the secreted. The protein localises to the host membrane. The protein resides in the host cell membrane. With respect to regulation, activity of listeriolysin O is regulated on multiple levels. It should be high in the phagosome, thereby allowing escape of the bacteria from the phagosomal compartment. Then, once inside the host cytosol, the activity must be controlled to prevent lysis of the host plasma membrane and loss of the intracellular environment. In terms of biological role, a cholesterol-dependent toxin that causes cytolysis by forming pores in cholesterol containing host membranes. After binding to target membranes, the protein undergoes a major conformation change, leading to its insertion in the host membrane and formation of an oligomeric pore complex. Cholesterol is required for binding to host membranes, membrane insertion and pore formation; cholesterol binding is mediated by a Thr-Leu pair in the C-terminus. Acts as a major virulence factor required for the escape of bacteria from phagosomal vacuoles and entry into the host cytosol. Can be reversibly inactivated by oxidation. This Listeria monocytogenes serotype 1/2a (strain 08-5578) protein is Listeriolysin O (hly).